The primary structure comprises 32 residues: Potassium channel toxin alpha-KTx 10.6 (32 aa).

Cystine bridges form between C3/C22, C8/C27, and C12/C29.

Expressed by the venom gland.

It localises to the secreted. In terms of biological role, blocks human voltage-gated potassium (Kv) channels Kv1.2/KCNA2 and Kv1.3/KCNA3. Does not block human Kv1.1 at 100nM concentration. The protein is Potassium channel toxin alpha-KTx 10.6 of Centruroides bonito (Scorpion).